Consider the following 1249-residue polypeptide: Voltage-dependent calcium channel unc-36 (1249 aa).

Positions 1–19 (MRVVHLLVVLATYVSTTSS) are cleaved as a signal peptide. The Extracellular segment spans residues 20–1228 (FNKESIKECA…SENERRPCST (1209 aa)). N-linked (GlcNAc...) asparagine glycans are attached at residues Asn100, Asn140, Asn146, Asn302, Asn520, Asn558, Asn757, Asn838, Asn903, Asn923, and Asn1130. In terms of domain architecture, VWFA spans 250 to 479 (NVLIMLDMSG…EKIHHYIRRM (230 aa)). A helical membrane pass occupies residues 1229–1248 (SPTIVSIFQILFGVFLHFCI). Phe1249 is a topological domain (cytoplasmic).

As to expression, decendants of the cells AB and AB.p (that give rise to nearly all non-pharyngeal neurons), decendants of P1 (that give rise to body muscle) and cell lineages that give rise to the adult and juvenile motor neurons. Expressed in body wall, vulval muscle and pharyngeal muscle.

It localises to the membrane. In terms of biological role, may act as an auxiliary subunit of the unc-2 voltage-gated calcium channel which appears to trigger calcium-activated signaling pathways that control the serotonin response. Inhibiting serotonin sensitivity of the vulval muscles results in egg laying defects. May act in both neurons and muscle cells to enhance motor activity as it is required for coordinated movement. Has a role in neural depolarization-induced calcium influx and pharyngeal pumping. Involved in restricting the expression of the putative olfactory receptor str-2 to only one of the two AWC neurons. The chain is Voltage-dependent calcium channel unc-36 (unc-36) from Caenorhabditis elegans.